The primary structure comprises 242 residues: Segregation and condensation protein A (242 aa).

This sequence belongs to the ScpA family. In terms of assembly, component of a cohesin-like complex composed of ScpA, ScpB and the Smc homodimer, in which ScpA and ScpB bind to the head domain of Smc. The presence of the three proteins is required for the association of the complex with DNA.

The protein localises to the cytoplasm. Functionally, participates in chromosomal partition during cell division. May act via the formation of a condensin-like complex containing Smc and ScpB that pull DNA away from mid-cell into both cell halves. This chain is Segregation and condensation protein A, found in Streptococcus pneumoniae serotype 2 (strain D39 / NCTC 7466).